A 220-amino-acid polypeptide reads, in one-letter code: UPF0319 protein YccT (220 aa).

The signal sequence occupies residues 1–20; the sequence is MKTGIVTTLIALCLPVSVFA.

This sequence belongs to the UPF0319 family.

This chain is UPF0319 protein YccT, found in Escherichia coli O139:H28 (strain E24377A / ETEC).